The following is a 363-amino-acid chain: Translocating chain-associated membrane protein 1-like 1 (363 aa).

The Cytoplasmic portion of the chain corresponds to 1–29; sequence MGLRKKNARNPPVLSHEFMVQNHADMVSC. The chain crosses the membrane as a helical span at residues 30-50; that stretch reads VGMFFVLGLMFEGTSEMSIAF. Over 51–80 the chain is Lumenal; sequence LTLQHGVVVPAEGLPSGSRTLYHYGVKDLA. A helical membrane pass occupies residues 81–101; that stretch reads TVFFYMLVAIIIHATIQEYVL. Residues 102–120 are Cytoplasmic-facing; the sequence is DKLSRRLQLTKGKQNKLNE. The region spanning 116 to 324 is the TLC domain; it reads NKLNEAGQLS…TVWLQRWLED (209 aa). A helical membrane pass occupies residues 121 to 141; that stretch reads AGQLSVFYIVSGIWGMIILAS. The Lumenal portion of the chain corresponds to 142 to 159; sequence ENCLSDPTLLWKSQPHNM. Residues 160-179 traverse the membrane as a helical segment; the sequence is MTFQMKFFYISQLAYWFHSF. Residues 180 to 191 are Cytoplasmic-facing; sequence PELYFQKVRKQD. A helical transmembrane segment spans residues 192–214; it reads IPGQLIYIGLHLFHIGGAYLLYL. Residues 215–218 lie on the Lumenal side of the membrane; the sequence is NHLG. A helical membrane pass occupies residues 219 to 241; it reads LLLLMLHYAVELLSSVCSLLYFG. Residues 242-250 are Cytoplasmic-facing; sequence DERYQKGLS. The helical transmembrane segment at 251–271 threads the bilayer; it reads LWPIVFISGRLVTLIVSVVTV. The Lumenal segment spans residues 272–295; it reads GLHLAGTNRNGNALSGNVNVLAAK. Residues 296–316 traverse the membrane as a helical segment; sequence IAVLSSSCSIQVYITWTLTTV. Residues 317 to 363 lie on the Cytoplasmic side of the membrane; that stretch reads WLQRWLEDANLHVCGRKRRSRARKGTENGVENPNRIDSPPKKKEKAP. A disordered region spans residues 338–363; that stretch reads ARKGTENGVENPNRIDSPPKKKEKAP. Residues 354–363 show a composition bias toward basic and acidic residues; that stretch reads SPPKKKEKAP.

Belongs to the TRAM family.

It is found in the endoplasmic reticulum membrane. In terms of biological role, stimulatory or required for the translocation of secretory proteins across the ER membrane. The sequence is that of Translocating chain-associated membrane protein 1-like 1 (Tram1l1) from Mus musculus (Mouse).